We begin with the raw amino-acid sequence, 158 residues long: Protein-export protein SecB (158 aa).

Belongs to the SecB family. As to quaternary structure, homotetramer, a dimer of dimers. One homotetramer interacts with 1 SecA dimer.

It is found in the cytoplasm. Its function is as follows. One of the proteins required for the normal export of preproteins out of the cell cytoplasm. It is a molecular chaperone that binds to a subset of precursor proteins, maintaining them in a translocation-competent state. It also specifically binds to its receptor SecA. The protein is Protein-export protein SecB of Rhodopseudomonas palustris (strain HaA2).